A 486-amino-acid polypeptide reads, in one-letter code: G2/mitotic-specific cyclin-4 (486 aa).

2 disordered regions span residues 1–80 (MRSY…SSNK) and 105–126 (VLLN…DKEN). Over residues 25–41 (ANLSSNHTTAGQPSTSS) the composition is skewed to polar residues. Residues 108–123 (NDDDDETDDEFDDEED) are compositionally biased toward acidic residues. A coiled-coil region spans residues 122–184 (EDKENRYHDL…QSHTQDMRSI (63 aa)). In terms of domain architecture, Cyclin N-terminal spans 234–359 (EIFNYLHELE…FMIDVLEFDL (126 aa)).

Belongs to the cyclin family. Cyclin AB subfamily. Interacts with IQG1.

Its function is as follows. 2/mitotic-specific cyclin essential for the control of the cell cycle at the G2/M (mitosis) transition. G2/M cyclins accumulate steadily during G2 and are abruptly destroyed at mitosis. Degradation is necessary for the cell to exit from mitosis. Plays a role in morphogenesis by negatively regulating polarized growth. Through binding to CDC28 regulates cytokinesis, partly by phosphorylation of the actomyosin ring component IQG1. The sequence is that of G2/mitotic-specific cyclin-4 (CLB4) from Candida albicans (strain SC5314 / ATCC MYA-2876) (Yeast).